The sequence spans 334 residues: tRNA uridine(34) hydroxylase (334 aa).

Residues 123-217 (SDPDVILVDT…YLEEVKAEES (95 aa)) form the Rhodanese domain. Cys177 (cysteine persulfide intermediate) is an active-site residue.

Belongs to the TrhO family.

It carries out the reaction uridine(34) in tRNA + AH2 + O2 = 5-hydroxyuridine(34) in tRNA + A + H2O. Catalyzes oxygen-dependent 5-hydroxyuridine (ho5U) modification at position 34 in tRNAs. This is tRNA uridine(34) hydroxylase from Shewanella baltica (strain OS195).